The sequence spans 194 residues: FMN-dependent NADH:quinone oxidoreductase (194 aa).

Residues S10 and 90–93 (MYNL) contribute to the FMN site.

This sequence belongs to the azoreductase type 1 family. In terms of assembly, homodimer. The cofactor is FMN.

The enzyme catalyses 2 a quinone + NADH + H(+) = 2 a 1,4-benzosemiquinone + NAD(+). It catalyses the reaction N,N-dimethyl-1,4-phenylenediamine + anthranilate + 2 NAD(+) = 2-(4-dimethylaminophenyl)diazenylbenzoate + 2 NADH + 2 H(+). In terms of biological role, quinone reductase that provides resistance to thiol-specific stress caused by electrophilic quinones. Its function is as follows. Also exhibits azoreductase activity. Catalyzes the reductive cleavage of the azo bond in aromatic azo compounds to the corresponding amines. The polypeptide is FMN-dependent NADH:quinone oxidoreductase (Haemophilus influenzae (strain PittEE)).